The chain runs to 1909 residues: Plexin-B3 (1909 aa).

Positions 1 to 44 (MCHAAQETPLLHHFMAPVMARWPPFGLCLLLLLLSPPPLPLTGA) are cleaved as a signal peptide. The region spanning 45 to 471 (HRFSAPNTTL…TAHQVDRIPV (427 aa)) is the Sema domain. Residues 45–1255 (HRFSAPNTTL…PLSAFPVEAQ (1211 aa)) lie on the Extracellular side of the membrane. N-linked (GlcNAc...) asparagine glycosylation occurs at asparagine 51. Disulfide bonds link cysteine 98/cysteine 107 and cysteine 132/cysteine 140. Asparagine 231 carries N-linked (GlcNAc...) asparagine glycosylation. Intrachain disulfides connect cysteine 267–cysteine 370, cysteine 283–cysteine 315, cysteine 333–cysteine 357, cysteine 474–cysteine 491, cysteine 480–cysteine 525, cysteine 483–cysteine 500, cysteine 494–cysteine 506, and cysteine 562–cysteine 580. The PSI 1 domain occupies 473–526 (ACPQFPDCASCLQAQDPLCGWCVLQGRCTRKGQCGRAGQLNQWLWSYEEDSHCL). Asparagine 615 carries an N-linked (GlcNAc...) asparagine glycan. 2 consecutive PSI domains span residues 620–682 (DCSA…GACP) and 787–833 (DCAM…LLCP). Asparagine 802, asparagine 900, asparagine 957, asparagine 1101, and asparagine 1218 each carry an N-linked (GlcNAc...) asparagine glycan. IPT/TIG domains follow at residues 835 to 925 (PSID…FTYQ), 927 to 1012 (PVLL…FRYT), 1015 to 1145 (PQLV…FLYQ), and 1159 to 1244 (ARPY…YEAE). A helical transmembrane segment spans residues 1256 to 1276 (AGVGMGAAVLIAAVLLLTLMY). Residues 1277–1909 (RHKSKQALRD…ALVENKVTDL (633 aa)) are Cytoplasmic-facing.

The protein belongs to the plexin family. As to quaternary structure, interacts (via cytoplasmic domain) with RAC1 and ARHGDIA. Binds MET and MST1R. Interacts (via cytoplasmic domain) with FSCN1. Interacts with RIT2/RIN. May form homodimers (via Sema domain). Expression detected in Purkinje and granular cells in cerebellum, and in brain neocortex but not in corpus callosum. Expressed in glioma cells and embryonic kidney cells (at protein level). Expressed in brain, liver, pancreas and placenta, with weak expression detected also in lung and kidney. Expressed in several glioma cell lines.

Its subcellular location is the cell membrane. Receptor for SEMA5A that plays a role in axon guidance, invasive growth and cell migration. Stimulates neurite outgrowth and mediates Ca(2+)/Mg(2+)-dependent cell aggregation. In glioma cells, SEMA5A stimulation of PLXNB3 results in the disassembly of F-actin stress fibers, disruption of focal adhesions and cellular collapse as well as inhibition of cell migration and invasion through ARHGDIA-mediated inactivation of RAC1. The polypeptide is Plexin-B3 (PLXNB3) (Homo sapiens (Human)).